Consider the following 365-residue polypeptide: Flagellin 1 (365 aa).

This sequence belongs to the bacterial flagellin family.

It localises to the secreted. The protein resides in the bacterial flagellum. Its function is as follows. Flagellin is the subunit protein which polymerizes to form the filaments of bacterial flagella. The protein is Flagellin 1 (fliC1) of Proteus mirabilis.